The following is a 470-amino-acid chain: tRNA-2-methylthio-N(6)-dimethylallyladenosine synthase (470 aa).

One can recognise an MTTase N-terminal domain in the interval 1 to 116 (MTYTVRTYGC…LPALLRRSRH (116 aa)). [4Fe-4S] cluster-binding residues include C10, C45, C79, C153, C157, and C160. Residues 139–369 (RESNYSAWVS…LDLQNRIALE (231 aa)) form the Radical SAM core domain. One can recognise a TRAM domain in the interval 372 to 439 (RKLIGKEVEL…PYHLIGDNAL (68 aa)).

Belongs to the methylthiotransferase family. MiaB subfamily. Monomer. [4Fe-4S] cluster is required as a cofactor.

It localises to the cytoplasm. It carries out the reaction N(6)-dimethylallyladenosine(37) in tRNA + (sulfur carrier)-SH + AH2 + 2 S-adenosyl-L-methionine = 2-methylsulfanyl-N(6)-dimethylallyladenosine(37) in tRNA + (sulfur carrier)-H + 5'-deoxyadenosine + L-methionine + A + S-adenosyl-L-homocysteine + 2 H(+). Its function is as follows. Catalyzes the methylthiolation of N6-(dimethylallyl)adenosine (i(6)A), leading to the formation of 2-methylthio-N6-(dimethylallyl)adenosine (ms(2)i(6)A) at position 37 in tRNAs that read codons beginning with uridine. This chain is tRNA-2-methylthio-N(6)-dimethylallyladenosine synthase, found in Tropheryma whipplei (strain Twist) (Whipple's bacillus).